A 434-amino-acid polypeptide reads, in one-letter code: 4-hydroxyphenylpyruvate dioxygenase (434 aa).

A disordered region spans residues 1–21 (MPPTPTTPAATGAAAAVTPEH). Positions 7–19 (TPAATGAAAAVTP) are enriched in low complexity. 2 VOC domains span residues 41-192 (SFHH…FLPG) and 208-368 (RFDH…IFTK). Positions 211, 293, and 379 each coordinate Fe cation.

The protein belongs to the 4HPPD family. Requires Fe cation as cofactor.

The protein localises to the cytoplasm. The catalysed reaction is 3-(4-hydroxyphenyl)pyruvate + O2 = homogentisate + CO2. It functions in the pathway amino-acid degradation; L-phenylalanine degradation; acetoacetate and fumarate from L-phenylalanine: step 3/6. It participates in cofactor biosynthesis; prenylquinone biosynthesis. In Hordeum vulgare (Barley), this protein is 4-hydroxyphenylpyruvate dioxygenase.